Here is a 144-residue protein sequence, read N- to C-terminus: Tryparedoxin (144 aa).

A Thioredoxin domain is found at 2–144; that stretch reads SGLAKYLPGA…PDGANFPWPN (143 aa). A disulfide bridge connects residues cysteine 40 and cysteine 43.

It belongs to the thioredoxin family.

Its function is as follows. Acts as a thiol-disulfide oxidoreductase. It is spontaneously reduced by trypanothione. The chain is Tryparedoxin from Trypanosoma brucei brucei.